We begin with the raw amino-acid sequence, 454 residues long: Histidine--tRNA ligase (454 aa).

Belongs to the class-II aminoacyl-tRNA synthetase family. Homodimer.

It localises to the cytoplasm. The catalysed reaction is tRNA(His) + L-histidine + ATP = L-histidyl-tRNA(His) + AMP + diphosphate + H(+). The chain is Histidine--tRNA ligase from Porphyromonas gingivalis (strain ATCC BAA-308 / W83).